The primary structure comprises 202 residues: MMIIVMLLLSYLIGAFPSGFVIGKLFFKKDIRQFGSGNTGATNSFRVLGRPAGFLVTFLDIFKGFITVFFPLWLPVHADGPISTFFTNGLIVGLFAILGHVYPVYLKFQGGKAVATSAGVVLGVNPILLLILAIIFFIVLKIFKYVSLASIVAAICCVIGSLIIQDYILLVVSFLVSIILIIRHRSNIARIFRGEEPKIKWM.

The next 6 membrane-spanning stretches (helical) occupy residues 2–22, 54–74, 85–105, 120–140, 141–161, and 162–182; these read MIIV…GFVI, FLVT…PLWL, FFTN…YPVY, VVLG…FIVL, KIFK…VIGS, and LIIQ…ILII.

Belongs to the PlsY family. Probably interacts with PlsX.

It is found in the cell membrane. The enzyme catalyses an acyl phosphate + sn-glycerol 3-phosphate = a 1-acyl-sn-glycero-3-phosphate + phosphate. It functions in the pathway lipid metabolism; phospholipid metabolism. Its function is as follows. Catalyzes the transfer of an acyl group from acyl-phosphate (acyl-PO(4)) to glycerol-3-phosphate (G3P) to form lysophosphatidic acid (LPA). This enzyme utilizes acyl-phosphate as fatty acyl donor, but not acyl-CoA or acyl-ACP. The protein is Glycerol-3-phosphate acyltransferase of Staphylococcus aureus (strain Mu3 / ATCC 700698).